A 2073-amino-acid chain; its full sequence is MIIKKKKDWRTQLFNRSQKKTIERMRKERNNQSVEMDSHTFNNNNNNNNNNNINNNNNINNNNNNNNNNNNNNNSINNYGHQHLNSSSSSQSFQDQLVQDLQSILMAQQHNIISPQLQQQQQQQQQQQPSFNSNNNNNNNTNTYNFQPEAIENNNIGINSNGYNPIQQQFQQQHQLQQQIQQQQIQFQNQNQNQQTHQNRQLQQQQQHQIQQLQLQQQLQQQLQQQQQHQQQLQQQMQHQQMQQQQIPHHQQNQQLQQQQQQQVPHQQQNQLIQQQQQQQQQQQQQQQHQQHQQHQQHQQQHQQHQQQHQQHQQQHQHQHQQQHQQQQQPQNQQQQQPQNQQMQQQQQQNQQMQQQQQQNQQMQQQMQQQQQLQQQQQILQQQQQIQQQQQQQQQILQPQQQPQQQQQQQQLLQQQQQQQLMQQQQQQQQQQQQQQQQQQQQQQQQQQQQQQQPQQQQQIQQQQPQQQPQQQQQPQQQQSQQQPQPQQQQQQQQQQQQQQQQIQQQYVDDNGDNTLLIFISNMCRNVEIPAFSVQPDQYYQYFVEKIVVIWSDLISSSGSTKMTHEETQQQKSSLFEQCRRIIVTYPHFFNQIITERFIFDLEDLNSKISDIFKQFNNNNNNNNNNAIENSPIMAEQYKRFQTDYIIKFDQLQCFKFPDYSLSSIISTLNPSPLRQQQQQQQQQQQQQQQQQQQQQQQQQQQIQIQNQTIPIPPSPQPTQQYQPITQLDQQPQPQPQPQLQQQLQQTILDNNNNNNTNNTNNTNTINNNLDISNDIINSSNNIGLCSSPISLENEKGNNNNNNNKINNNNNTSSSSSITIPINNTTSSPINKNINDDINNNNNNNNSNNNNNNNNNNNNNNNNNNTNTNNEIKKTNNDISTNLSMPTVVDLNSSNNITSSTFLLNPNINNNNNNNSSGGGGSSSSSNSNSSSPNIPNKPKKPVKSNSKKVIDLLEDNDSDSSDSSDSSDSSDSSDSSDSSDSDSSDSSDSSDSSDDEKKKKPKKPIVNKKNLVKTNTSTNSKDSKPASTATSTTTTTTNSKPSITQPTSKIKPSSTIPSQPTSITTKKKPENSTTSLPASTSSSSPSNTVIKSSPPISKTLPTPTSTTSLSSSSSATVNKPIPPTTKKPISTINNNTLNNNTNSSINKIASNSTSTLGNKNLGTPSNYNNNNNNIGAEKKKEKALTLTESQLTNEKELPSLTDYIAQLNKIKKSNTTSGVTNSNNNNNNNNNNNNNNNNNNNNNNNNNKGTTTSTTTVINDPNKKKISWKDEKGGCSVVDRVPMFIQEFSECVTWPRIREFLIVIDSKMSNACKKRFLELGGLANIHTVLKYSQETVTIPRDTIIALKGLKGLPVTVEHLHAEKLIGKTIRSFKKHSNPNVKEYAEELESEWMYLIKGGATSNTSSTTSSASSSSSSSISNGNNSDKKRNRDQPITDTSKKLKSSSSSSSSSSSSSSSTNARSSSPVPNTQLPPKKSIIKEYDDLFMNKLSTPSSSSSSSSSSSSSSTTTTTTSTGSTIPLSPPPSSSSSSNNNNSLSPIMTFKTKQSIAAAAAKKQQTQELSDSTAKSLSSNGATTKLFAAMVDKKSQTKPGGGSGGSSNVSGKSDSSQTLLESIGISWDTPTKEEEDLTPVPDPNRRKSSKGKVSVKWLSDEKLVNVKEFCKEEIADAKANEEYELEQSKRFELETERLLGFKPMKATLEWKKPIPIEDTQLPDIKLYGSESLEKDIQFERENFTLMEFYIGSNIPDTPKEPDDEQKDYDDKDVLIIPSGDINDVFDDSKINELMNVIPPILSDQINDDNIINNNNNTHSNSPDENNTKMINDENNDPNNTGSSNKVVEMIANIDPNNNNNNNNINNNNNIINNINNNNNNNMNNNNMGNMNNMGNMNNQFNNMNNNNNNNQFNNGYNNNNNNNNNNNNNNNNNNNNMMGYNNGYNMNNGNQFNNNYNGVYQNNGFNNFNNQYNNGQYNGYNNSNGQFNNNNNNVYNNNNNNQFNNNFNQYNNNNNNNFNQNFNNGFNNNNNNNNQYNNGYNNFNNNNNYGNMNNYNNNNNNYYNNNNNNNNNNNNNQSYS.

4 disordered regions span residues I22–Q94, P115–F146, Q241–Q260, and Q287–Q334. Residues N31–F41 are compositionally biased toward polar residues. The segment covering N42–N78 has biased composition (low complexity). 2 coiled-coil regions span residues I166 to Q453 and L674 to I710. 2 stretches are compositionally biased toward low complexity: residues Q287–Q314 and Q322–Q334. 10 disordered regions span residues K796–I879, I908–I1175, N1215–N1260, N1403–K1475, K1489–P1539, A1551–S1571, K1587–K1645, I1804–S1836, N1868–N1935, and F2019–S2073. Low complexity-rich tracts occupy residues N798–N870 and S923–N937. A compositionally biased stretch (basic residues) spans K938–S947. The segment covering L953–D963 has biased composition (acidic residues). Low complexity-rich tracts occupy residues S964 to S977, A1027 to T1038, P1047 to T1065, S1073 to S1115, and K1127 to T1156. The segment covering L1157–S1166 has biased composition (polar residues). Composition is skewed to low complexity over residues N1215–V1258 and N1403–N1424. Basic and acidic residues predominate over residues S1425–K1440. 4 stretches are compositionally biased toward low complexity: residues S1444–S1465, L1490–P1520, S1527–P1539, and A1551–Q1560. A compositionally biased stretch (polar residues) spans E1561–S1571. Composition is skewed to low complexity over residues S1599–S1609 and I1804–E1817. Positions N1884–M1930 form a coiled coil.

The protein belongs to the Mediator complex subunit 26 family. As to quaternary structure, component of the Mediator complex.

Its subcellular location is the nucleus. Component of the Mediator complex, a coactivator involved in the regulated transcription of nearly all RNA polymerase II-dependent genes. Mediator functions as a bridge to convey information from gene-specific regulatory proteins to the basal RNA polymerase II transcription machinery. Mediator is recruited to promoters by direct interactions with regulatory proteins and serves as a scaffold for the assembly of a functional preinitiation complex with RNA polymerase II and the general transcription factors. The chain is Putative mediator of RNA polymerase II transcription subunit 26 (med26) from Dictyostelium discoideum (Social amoeba).